A 364-amino-acid chain; its full sequence is Very-long-chain (3R)-3-hydroxyacyl-CoA dehydratase 3 (364 aa).

The Cytoplasmic portion of the chain corresponds to 1-151 (MAMENQVLTP…ETLTNLRKGY (151 aa)). One can recognise a CS domain in the interval 7–96 (VLTPHVYWAQ…KVSQWWERLT (90 aa)). At threonine 9 the chain carries Phosphothreonine. Residues 113–138 (LDESDAEMELRAKEEERLNKLRLESE) adopt a coiled-coil conformation. Phosphoserine is present on residues serine 116 and serine 137. The helical transmembrane segment at 152-172 (LFMYNLVQFLGFSWIFVNLTV) threads the bilayer. Over 173-191 (RFCILGKESFYDTFHTVAD) the chain is Lumenal. A helical membrane pass occupies residues 192–212 (MMYFCQMLAVVETINAAIGVT). Residues 213–214 (TS) are Cytoplasmic-facing. The helical transmembrane segment at 215–235 (PVLPSLIQLLGRNFILFIIFG) threads the bilayer. Over 236 to 244 (TMEEMQNKA) the chain is Lumenal. Residues 245 to 265 (VVFFVFYLWSAIEIFRYSFYM) traverse the membrane as a helical segment. Topologically, residues 266 to 282 (LTCIDMDWEVLTWLRYT) are cytoplasmic. Residues 283–303 (LWIPLYPLGCLAEAVSVVQSI) traverse the membrane as a helical segment. Active-site residues include tyrosine 288 and glutamate 295. Residues 304-324 (PIFNETGRFSFTLPYPVKIKV) are Lumenal-facing. Residues 325 to 345 (RFSFFLQIYLIMIFLGLYINF) traverse the membrane as a helical segment. The Cytoplasmic segment spans residues 346 to 364 (RHLYKQRRRRYGQKKKKIH).

This sequence belongs to the very long-chain fatty acids dehydratase HACD family. As to quaternary structure, may interact with enzymes of the ELO family (including ELOVL1); with those enzymes that mediate condensation, the first of the four steps of the reaction cycle responsible for fatty acids elongation, may be part of a larger fatty acids elongase complex. Interacts with RAC1.

The protein localises to the endoplasmic reticulum membrane. The catalysed reaction is a very-long-chain (3R)-3-hydroxyacyl-CoA = a very-long-chain (2E)-enoyl-CoA + H2O. The enzyme catalyses (3R)-hydroxyhexadecanoyl-CoA = (2E)-hexadecenoyl-CoA + H2O. It functions in the pathway lipid metabolism; fatty acid biosynthesis. Catalyzes the third of the four reactions of the long-chain fatty acids elongation cycle. This endoplasmic reticulum-bound enzymatic process, allows the addition of two carbons to the chain of long- and very long-chain fatty acids/VLCFAs per cycle. This enzyme catalyzes the dehydration of the 3-hydroxyacyl-CoA intermediate into trans-2,3-enoyl-CoA, within each cycle of fatty acid elongation. Thereby, it participates in the production of VLCFAs of different chain lengths that are involved in multiple biological processes as precursors of membrane lipids and lipid mediators. Involved in Rac1-signaling pathways leading to the modulation of gene expression. The sequence is that of Very-long-chain (3R)-3-hydroxyacyl-CoA dehydratase 3 from Pongo abelii (Sumatran orangutan).